Consider the following 276-residue polypeptide: Rhamnulose-1-phosphate aldolase (276 aa).

E117 is a catalytic residue. Residues H141, H143, and H212 each coordinate Zn(2+).

The protein belongs to the aldolase class II family. RhaD subfamily. In terms of assembly, homotetramer. Zn(2+) serves as cofactor.

The protein resides in the cytoplasm. It carries out the reaction L-rhamnulose 1-phosphate = (S)-lactaldehyde + dihydroxyacetone phosphate. It functions in the pathway carbohydrate degradation; L-rhamnose degradation; glycerone phosphate from L-rhamnose: step 3/3. Functionally, catalyzes the reversible cleavage of L-rhamnulose-1-phosphate to dihydroxyacetone phosphate (DHAP) and L-lactaldehyde. This is Rhamnulose-1-phosphate aldolase from Klebsiella pneumoniae (strain 342).